A 317-amino-acid chain; its full sequence is MRSYLDFEKPVAELEAKVEELRALSSPDDGVSIADEVQKLEGKAQEALTQLYASLTPWQKTLVARHPARPHFSDFAKGLFTDFTPLAGDRKYGEDEALIGAFARFRGEAVCVLGHEKGSTTETRIRHNFGMARPEGYRKAVRIMELADRFGLPLISLVDTAGAYPGIGAEERGQAEAIARSTDAGLGLGVPNVAVVIGEGGSGGAIAIAAANKVLMLEHAVYSVISPEGAASILWRDTSKAQEAATNMKITAQDLLRFGIVDDIVREPVGGAHRDPKAAIEATGNAIAEAMGSLAGLDADAVRKARRAKFLAIGRTL.

Positions 39–293 constitute a CoA carboxyltransferase C-terminal domain; that stretch reads KLEGKAQEAL…GNAIAEAMGS (255 aa).

This sequence belongs to the AccA family. As to quaternary structure, acetyl-CoA carboxylase is a heterohexamer composed of biotin carboxyl carrier protein (AccB), biotin carboxylase (AccC) and two subunits each of ACCase subunit alpha (AccA) and ACCase subunit beta (AccD).

Its subcellular location is the cytoplasm. It carries out the reaction N(6)-carboxybiotinyl-L-lysyl-[protein] + acetyl-CoA = N(6)-biotinyl-L-lysyl-[protein] + malonyl-CoA. The protein operates within lipid metabolism; malonyl-CoA biosynthesis; malonyl-CoA from acetyl-CoA: step 1/1. In terms of biological role, component of the acetyl coenzyme A carboxylase (ACC) complex. First, biotin carboxylase catalyzes the carboxylation of biotin on its carrier protein (BCCP) and then the CO(2) group is transferred by the carboxyltransferase to acetyl-CoA to form malonyl-CoA. The polypeptide is Acetyl-coenzyme A carboxylase carboxyl transferase subunit alpha (Azorhizobium caulinodans (strain ATCC 43989 / DSM 5975 / JCM 20966 / LMG 6465 / NBRC 14845 / NCIMB 13405 / ORS 571)).